We begin with the raw amino-acid sequence, 262 residues long: Hydroxyethylthiazole kinase (262 aa).

Substrate is bound at residue Met50. 2 residues coordinate ATP: Arg125 and Thr171. A substrate-binding site is contributed by Gly198.

Belongs to the Thz kinase family. Requires Mg(2+) as cofactor.

The enzyme catalyses 5-(2-hydroxyethyl)-4-methylthiazole + ATP = 4-methyl-5-(2-phosphooxyethyl)-thiazole + ADP + H(+). It functions in the pathway cofactor biosynthesis; thiamine diphosphate biosynthesis; 4-methyl-5-(2-phosphoethyl)-thiazole from 5-(2-hydroxyethyl)-4-methylthiazole: step 1/1. Catalyzes the phosphorylation of the hydroxyl group of 4-methyl-5-beta-hydroxyethylthiazole (THZ). This is Hydroxyethylthiazole kinase from Shigella boydii serotype 18 (strain CDC 3083-94 / BS512).